The primary structure comprises 616 residues: Endonuclease 8-like 3 (616 aa).

The FPG-type zinc-finger motif lies at 271–305; it reads KVYKRPNCGQCGTKITVCRLGEHNRMTYFCPKCQK. A RanBP2-type zinc finger spans residues 341–370; it reads KEEHWACAVCTLINKPSDKQCDACLTLRPE. The segment at 491 to 524 is disordered; that stretch reads LKTGHTTSNTIHLSSTISSPQSKMTGDAAAKTGN. Positions 494-514 are enriched in polar residues; sequence GHTTSNTIHLSSTISSPQSKM. C527, H530, C553, C561, C574, H576, C599, and C607 together coordinate Zn(2+). 2 GRF-type zinc fingers span residues 527–570 and 574–616; these read CSAH…ADLH and CNHG…AKTE.

The protein belongs to the FPG family.

The protein localises to the nucleus. It localises to the chromosome. It catalyses the reaction 2'-deoxyribonucleotide-(2'-deoxyribose 5'-phosphate)-2'-deoxyribonucleotide-DNA = a 3'-end 2'-deoxyribonucleotide-(2,3-dehydro-2,3-deoxyribose 5'-phosphate)-DNA + a 5'-end 5'-phospho-2'-deoxyribonucleoside-DNA + H(+). DNA glycosylase which prefers single-stranded DNA (ssDNA), or partially ssDNA structures such as bubble and fork structures, to double-stranded DNA (dsDNA). Mediates interstrand cross-link repair in response to replication stress: recruited to replication stress sites via interaction with ubiquitinated CMG helicase and acts by mediating DNA glycosylase activity. Cleaves one of the two N-glycosyl bonds comprising the interstrand cross-link, which avoids the formation of a double-strand break but generates an abasic site that is bypassed by translesion synthesis polymerases. This chain is Endonuclease 8-like 3, found in Xenopus laevis (African clawed frog).